The sequence spans 323 residues: Small ribosomal subunit protein uS9m (323 aa).

The segment at 298-323 (TRDARKVERKKPGKVKARKSPTWVKR) is disordered. The segment covering 304–323 (VERKKPGKVKARKSPTWVKR) has biased composition (basic residues).

Belongs to the universal ribosomal protein uS9 family.

Its subcellular location is the mitochondrion. The polypeptide is Small ribosomal subunit protein uS9m (MRPS9) (Debaryomyces hansenii (strain ATCC 36239 / CBS 767 / BCRC 21394 / JCM 1990 / NBRC 0083 / IGC 2968) (Yeast)).